The primary structure comprises 146 residues: Transcriptional regulator MraZ (146 aa).

SpoVT-AbrB domains are found at residues T6–E49 and T78–S121.

It belongs to the MraZ family. Forms oligomers.

It localises to the cytoplasm. The protein localises to the nucleoid. This chain is Transcriptional regulator MraZ, found in Mesoplasma florum (strain ATCC 33453 / NBRC 100688 / NCTC 11704 / L1) (Acholeplasma florum).